A 421-amino-acid polypeptide reads, in one-letter code: Pyridinium-3,5-bisthiocarboxylic acid mononucleotide nickel insertion protein (421 aa).

This sequence belongs to the LarC family.

The enzyme catalyses Ni(II)-pyridinium-3,5-bisthiocarboxylate mononucleotide = pyridinium-3,5-bisthiocarboxylate mononucleotide + Ni(2+). Its function is as follows. Involved in the biosynthesis of a nickel-pincer cofactor ((SCS)Ni(II) pincer complex). Binds Ni(2+), and functions in nickel delivery to pyridinium-3,5-bisthiocarboxylic acid mononucleotide (P2TMN), to form the mature cofactor. Is thus probably required for the activation of nickel-pincer cofactor-dependent enzymes. The chain is Pyridinium-3,5-bisthiocarboxylic acid mononucleotide nickel insertion protein from Alkaliphilus metalliredigens (strain QYMF).